Reading from the N-terminus, the 307-residue chain is MFEHIPVLLEESVSFLITNPDGIYVDATFGLGGHSKRILEKISNKGFLIAIDRDLEAIELGKRKLEAYKNVKIVHSSFSKVDELLECLGIEKIDGILFDFGVSSLQLDKQERGFSYNKEAFLDMRMDTTSKLTAYDVVNFYSQEDLEKIIREYGEERFARRIAKAIVERRSKKPIETTTELSSLISSLVPRPKDGSHPAQRTFQAIRIEVNGELDEIKIALEKSLRFLRSGGRICAISFHSLEDRIVKEFFKFHSLECVCPKDIPVCRCGKKKELNIITKKPITPSKEEIESNKRSHSAKLRVAEKV.

S-adenosyl-L-methionine is bound by residues 32–34 (GGH), Asp-52, Phe-78, Asp-99, and Gln-106. Residues 287-307 (KEEIESNKRSHSAKLRVAEKV) are disordered.

This sequence belongs to the methyltransferase superfamily. RsmH family.

It is found in the cytoplasm. It catalyses the reaction cytidine(1402) in 16S rRNA + S-adenosyl-L-methionine = N(4)-methylcytidine(1402) in 16S rRNA + S-adenosyl-L-homocysteine + H(+). In terms of biological role, specifically methylates the N4 position of cytidine in position 1402 (C1402) of 16S rRNA. The protein is Ribosomal RNA small subunit methyltransferase H of Caldicellulosiruptor bescii (strain ATCC BAA-1888 / DSM 6725 / KCTC 15123 / Z-1320) (Anaerocellum thermophilum).